A 268-amino-acid chain; its full sequence is Type II methyltransferase M2.DpnII (268 aa).

This sequence belongs to the N(4)/N(6)-methyltransferase family. In terms of assembly, homodimer.

The catalysed reaction is a 2'-deoxyadenosine in DNA + S-adenosyl-L-methionine = an N(6)-methyl-2'-deoxyadenosine in DNA + S-adenosyl-L-homocysteine + H(+). Its function is as follows. A beta subtype methylase that recognizes the single- or double-stranded sequence 5'-GATC-3', methylates A-2 on one or both strands (respectively), and protects the DNA from cleavage by the DpnII endonuclease. Further methylates DNA that is already methylated at 5'-GATC-3' sites. Essential for establishment of a previously unmethylated plasmid transformed into the cell as single-stranded DNA, enhances plasmid transfer to DpnII-containing strains of Streptococcus pneumoniae. The protein is Type II methyltransferase M2.DpnII of Streptococcus pneumoniae.